Reading from the N-terminus, the 329-residue chain is Peroxidase 58 (329 aa).

A signal peptide spans 1 to 23 (MGLSKTIPLVLLPILMFGVLSNA). Cystine bridges form between cysteine 34–cysteine 116, cysteine 67–cysteine 72, cysteine 122–cysteine 325, and cysteine 201–cysteine 234. Asparagine 36 carries an N-linked (GlcNAc...) asparagine glycan. Residue histidine 65 is the Proton acceptor of the active site. 5 residues coordinate Ca(2+): aspartate 66, valine 69, glycine 71, aspartate 73, and serine 75. Residue proline 164 participates in substrate binding. Histidine 194 provides a ligand contact to heme b. A Ca(2+)-binding site is contributed by threonine 195. Asparagine 210 carries an N-linked (GlcNAc...) asparagine glycan. Ca(2+) is bound by residues aspartate 247, serine 250, and aspartate 255.

This sequence belongs to the peroxidase family. Classical plant (class III) peroxidase subfamily. It depends on heme b as a cofactor. Requires Ca(2+) as cofactor.

It localises to the secreted. It catalyses the reaction 2 a phenolic donor + H2O2 = 2 a phenolic radical donor + 2 H2O. In terms of biological role, removal of H(2)O(2), oxidation of toxic reductants, biosynthesis and degradation of lignin, suberization, auxin catabolism, response to environmental stresses such as wounding, pathogen attack and oxidative stress. These functions might be dependent on each isozyme/isoform in each plant tissue. The chain is Peroxidase 58 (PER58) from Arabidopsis thaliana (Mouse-ear cress).